A 117-amino-acid chain; its full sequence is Flagellar transcriptional regulator FlhD (117 aa).

The protein belongs to the FlhD family. Homodimer; disulfide-linked. Forms a heterohexamer composed of two FlhC and four FlhD subunits. Each FlhC binds a FlhD dimer, forming a heterotrimer, and a hexamer assembles by dimerization of two heterotrimers.

It is found in the cytoplasm. Functions in complex with FlhC as a master transcriptional regulator that regulates transcription of several flagellar and non-flagellar operons by binding to their promoter region. Activates expression of class 2 flagellar genes, including fliA, which is a flagellum-specific sigma factor that turns on the class 3 genes. Also regulates genes whose products function in a variety of physiological pathways. This is Flagellar transcriptional regulator FlhD from Erwinia amylovora (strain CFBP1430).